The sequence spans 72 residues: Defensin-like protein 230 (72 aa).

An N-terminal signal peptide occupies residues 1 to 27 (MEKKSLACLSFLLLVLFVAQEIVVSEA). Intrachain disulfides connect C30-C72, C41-C60, C45-C66, and C49-C68.

This sequence belongs to the DEFL family.

It is found in the secreted. The protein is Defensin-like protein 230 (PI230) of Pisum sativum (Garden pea).